An 88-amino-acid chain; its full sequence is Small ribosomal subunit protein bS20 (88 aa).

2 disordered regions span residues 1-23 (MANSPQARKRARQAENRRQHNAA) and 69-88 (PNKAARHKSRLNTKIKAMAA). Residues 69 to 81 (PNKAARHKSRLNT) are compositionally biased toward basic residues.

It belongs to the bacterial ribosomal protein bS20 family.

Its function is as follows. Binds directly to 16S ribosomal RNA. The protein is Small ribosomal subunit protein bS20 of Alcanivorax borkumensis (strain ATCC 700651 / DSM 11573 / NCIMB 13689 / SK2).